A 326-amino-acid chain; its full sequence is Protein FAM50 homolog (326 aa).

Residues 76–112 are disordered; sequence EISNRDLQVARGASSSTSLAKDSQEAREKEEHVAKHT. Over residues 97–109 the composition is skewed to basic and acidic residues; that stretch reads DSQEAREKEEHVA.

This sequence belongs to the FAM50 family.

The protein is Protein FAM50 homolog of Caenorhabditis briggsae.